The primary structure comprises 864 residues: Alanine--tRNA ligase (864 aa).

His-553, His-557, Cys-655, and His-659 together coordinate Zn(2+). Residues 828-847 form a disordered region; sequence VGGKGGGRPDMAQAGGKDPS.

The protein belongs to the class-II aminoacyl-tRNA synthetase family. Zn(2+) is required as a cofactor.

It is found in the cytoplasm. The enzyme catalyses tRNA(Ala) + L-alanine + ATP = L-alanyl-tRNA(Ala) + AMP + diphosphate. Its function is as follows. Catalyzes the attachment of alanine to tRNA(Ala) in a two-step reaction: alanine is first activated by ATP to form Ala-AMP and then transferred to the acceptor end of tRNA(Ala). Also edits incorrectly charged Ser-tRNA(Ala) and Gly-tRNA(Ala) via its editing domain. This Hydrogenovibrio crunogenus (strain DSM 25203 / XCL-2) (Thiomicrospira crunogena) protein is Alanine--tRNA ligase.